The following is a 605-amino-acid chain: Kelch-like protein 41b (605 aa).

One can recognise a BTB domain in the interval valine 32–aspartate 102. One can recognise a BACK domain in the interval cysteine 136–glutamate 238. 5 Kelch repeats span residues glutamine 345–asparagine 397, leucine 398–asparagine 446, leucine 447–glycine 494, isoleucine 496–glycine 541, and leucine 543–asparagine 598.

The protein localises to the cytoplasm. The protein resides in the cytoskeleton. It localises to the sarcoplasmic reticulum membrane. Its subcellular location is the endoplasmic reticulum membrane. Involved in skeletal muscle development and maintenance. In Danio rerio (Zebrafish), this protein is Kelch-like protein 41b.